Here is a 469-residue protein sequence, read N- to C-terminus: Serine carboxypeptidase-like 41 (469 aa).

An N-terminal signal peptide occupies residues 1 to 20 (MAIVSLRDVAMVMVTVQVFA). 3 disulfide bridges follow: Cys83/Cys342, Cys243/Cys260, and Cys285/Cys310. N-linked (GlcNAc...) asparagine glycosylation occurs at Asn134. Ser175 is an active-site residue. Asn255 carries N-linked (GlcNAc...) asparagine glycosylation. 2 N-linked (GlcNAc...) asparagine glycosylation sites follow: Asn331 and Asn347. Active-site residues include Asp379 and His436. Residue Asn461 is glycosylated (N-linked (GlcNAc...) asparagine).

The protein belongs to the peptidase S10 family. Expressed in flowers.

It localises to the secreted. Functionally, probable carboxypeptidase. In Arabidopsis thaliana (Mouse-ear cress), this protein is Serine carboxypeptidase-like 41 (SCPL41).